A 259-amino-acid chain; its full sequence is Transcription factor bHLH125 (259 aa).

In terms of domain architecture, bHLH spans 73-125 (SKKMKHRDIERQRRQEVSSLFKRLRTLLPFQYIQGKRSTSDHIVQAVNYIKDL).

As to quaternary structure, homodimer.

It is found in the nucleus. The polypeptide is Transcription factor bHLH125 (BHLH125) (Arabidopsis thaliana (Mouse-ear cress)).